A 270-amino-acid polypeptide reads, in one-letter code: Probable aquaporin NIP-type (270 aa).

2 helical membrane-spanning segments follow: residues 45–65 (LIAE…SVAV) and 72–92 (VTFP…VYTV). Positions 101–103 (NPA) match the NPA 1 motif. 3 helical membrane passes run 121–141 (LYII…ALLF), 160–180 (SLAI…GVAT), and 188–208 (VAGI…GPIS). The short motif at 213–215 (NPA) is the NPA 2 element. The chain crosses the membrane as a helical span at residues 231–251 (WVYVVGPIIGTLAGAFVYNLI).

It belongs to the MIP/aquaporin (TC 1.A.8) family. NIP (TC 1.A.8.12) subfamily. In terms of tissue distribution, pollen specific.

It localises to the membrane. Functionally, aquaporins facilitate the transport of water and small neutral solutes across cell membranes. This is Probable aquaporin NIP-type from Nicotiana alata (Winged tobacco).